The primary structure comprises 164 residues: Diphosphoinositol polyphosphate phosphohydrolase 3-beta (164 aa).

Substrate contacts are provided by residues R9, 17–19, and 38–40; these read KKR and SSR. Residues 17–144 enclose the Nudix hydrolase domain; that stretch reads KKRAACLCFR…VHAEYLEKLK (128 aa). Positions 49 and 65 each coordinate Mg(2+). A Nudix box motif is present at residues 50 to 71; the sequence is GGMEPEEEPGGAAVREVYEEAG. The active-site Proton acceptor is E68. E69 contacts Mg(2+). Substrate is bound by residues 89-91, R115, and K133; that span reads RKH. The segment at 144 to 164 is disordered; the sequence is KLGGSPTNGNSMAPSSPDSDP. Residues 148–164 are compositionally biased toward polar residues; it reads SPTNGNSMAPSSPDSDP.

Belongs to the Nudix hydrolase family. DIPP subfamily. The cofactor is Mg(2+). Mn(2+) serves as cofactor. As to expression, mainly expressed in testis and, at lower level in brain. According to PubMed:12121577, it is also expressed in pancreas and weakly expressed in thymus, prostate, ovary, lung, small intestine and heart.

The protein resides in the cytoplasm. It catalyses the reaction diphospho-myo-inositol polyphosphate + H2O = myo-inositol polyphosphate + phosphate.. The enzyme catalyses P(1),P(6)-bis(5'-adenosyl) hexaphosphate + H2O = adenosine 5'-pentaphosphate + AMP + 2 H(+). It carries out the reaction P(1),P(5)-bis(5'-adenosyl) pentaphosphate + H2O = adenosine 5'-tetraphosphate + AMP + 2 H(+). Functionally, cleaves a beta-phosphate from the diphosphate groups in PP-InsP5 (diphosphoinositol pentakisphosphate), suggesting that it may play a role in signal transduction. Also able to catalyze the hydrolysis of dinucleoside oligophosphates, with Ap6A and Ap5A being the preferred substrates. The major reaction products are ADP and p4a from Ap6A and ADP and ATP from Ap5A. Also able to hydrolyze 5-phosphoribose 1-diphosphate. The sequence is that of Diphosphoinositol polyphosphate phosphohydrolase 3-beta from Homo sapiens (Human).